A 738-amino-acid chain; its full sequence is 1,4-alpha-glucan branching enzyme GlgB (738 aa).

Asp-417 functions as the Nucleophile in the catalytic mechanism. Catalysis depends on Glu-472, which acts as the Proton donor.

It belongs to the glycosyl hydrolase 13 family. GlgB subfamily. Monomer.

It catalyses the reaction Transfers a segment of a (1-&gt;4)-alpha-D-glucan chain to a primary hydroxy group in a similar glucan chain.. It functions in the pathway glycan biosynthesis; glycogen biosynthesis. Functionally, catalyzes the formation of the alpha-1,6-glucosidic linkages in glycogen by scission of a 1,4-alpha-linked oligosaccharide from growing alpha-1,4-glucan chains and the subsequent attachment of the oligosaccharide to the alpha-1,6 position. This chain is 1,4-alpha-glucan branching enzyme GlgB, found in Burkholderia pseudomallei (strain 1106a).